Consider the following 86-residue polypeptide: Small nuclear ribonucleoprotein F (86 aa).

The Sm domain maps to 14–86 (NPKPFLKGLV…NVLYIRELPN (73 aa)).

It belongs to the snRNP Sm proteins family. SmF/LSm6 subfamily. In terms of assembly, component of the Sm core complex, present in spliceosomal snRNP U1, U2, U4/U6 and U5. The core complex contains SMB1, SMD1, SMD2, SMD3, SME1, SMX3 and SMX2 (Sm proteins B, D1, D2, D3, E, F and G, respectively), and is probably a heptameric ring structure. SMX3 specifically interacts with SME1. Belongs to the CWC complex (or CEF1-associated complex), a spliceosome sub-complex reminiscent of a late-stage spliceosome composed of the U2, U5 and U6 snRNAs and at least BUD13, BUD31, BRR2, CDC40, CEF1, CLF1, CUS1, CWC2, CWC15, CWC21, CWC22, CWC23, CWC24, CWC25, CWC27, ECM2, HSH155, IST3, ISY1, LEA1, MSL1, NTC20, PRP8, PRP9, PRP11, PRP19, PRP21, PRP22, PRP45, PRP46, SLU7, SMB1, SMD1, SMD2, SMD3, SMX2, SMX3, SNT309, SNU114, SPP2, SYF1, SYF2, RSE1 and YJU2. Component of the U4/U6-U5 tri-snRNP complex composed of the U4, U6 and U5 snRNAs and at least PRP3, PRP4, PRP6, PRP8, PRP18, PRP31, PRP38, SNU13, SNU23, SNU66, SNU114, SPP381, SMB1, SMD1, SMD2, SMD3, SMX2, SMX3, LSM2, LSM3, LSM4, LSM5, LSM6, LSM7, LSM8, BRR2 and DIB1.

It is found in the nucleus. The protein localises to the cytoplasm. In terms of biological role, plays a role in pre-mRNA splicing as a core component of the spliceosomal U1, U2, U4 and U5 small nuclear ribonucleoproteins (snRNPs), the building blocks of the spliceosome. This chain is Small nuclear ribonucleoprotein F (SMX3), found in Saccharomyces cerevisiae (strain ATCC 204508 / S288c) (Baker's yeast).